Reading from the N-terminus, the 120-residue chain is Large ribosomal subunit protein uL22 (120 aa).

This sequence belongs to the universal ribosomal protein uL22 family. As to quaternary structure, part of the 50S ribosomal subunit.

Functionally, this protein binds specifically to 23S rRNA; its binding is stimulated by other ribosomal proteins, e.g. L4, L17, and L20. It is important during the early stages of 50S assembly. It makes multiple contacts with different domains of the 23S rRNA in the assembled 50S subunit and ribosome. Its function is as follows. The globular domain of the protein is located near the polypeptide exit tunnel on the outside of the subunit, while an extended beta-hairpin is found that lines the wall of the exit tunnel in the center of the 70S ribosome. The sequence is that of Large ribosomal subunit protein uL22 from Corynebacterium diphtheriae (strain ATCC 700971 / NCTC 13129 / Biotype gravis).